Reading from the N-terminus, the 171-residue chain is Tetratricopeptide repeat protein 9C (171 aa).

3 TPR repeats span residues 8–41 (AQLY…LRGL), 72–107 (TDCY…QPDN), and 108–141 (AKAL…KPKD).

The protein belongs to the TTC9 family.

The polypeptide is Tetratricopeptide repeat protein 9C (TTC9C) (Bos taurus (Bovine)).